Reading from the N-terminus, the 308-residue chain is MSSKHVAVLLGGFSSERPVSLSSGTACADALEAEGYRVTRVDVGRDVAAVLQELRPDVVFNALHGPFGEDGTIQGILEYLEIPYTHSGVLASALAMDKDQAKHVAKAAGIPVAEALVMDRRSFGNQHPMKPPYVVKPVREGSSFGVVIVKEDQSHPPQVITSSEWRYGDRVMVERYIAGREFTCGVMGDVALGVTEIIPQGHAFYDYDSKYVKGGSKHVIPAQISPNIYQKIQTLALKAHQAIGCRGVSRSDFRFDDRGDGEGELIWLEINTQPGMTPTSLVPEMAQHAGLQFGEFLRWMVEDASCLR.

The ATP-grasp domain occupies 102 to 302 (KHVAKAAGIP…FGEFLRWMVE (201 aa)). 128–183 (PMKPPYVVKPVREGSSFGVVIVKEDQSHPPQVITSSEWRYGDRVMVERYIAGREFT) is a binding site for ATP. The Mg(2+) site is built by D252, E269, and N271.

It belongs to the D-alanine--D-alanine ligase family. Requires Mg(2+) as cofactor. Mn(2+) serves as cofactor.

The protein localises to the cytoplasm. It catalyses the reaction 2 D-alanine + ATP = D-alanyl-D-alanine + ADP + phosphate + H(+). It functions in the pathway cell wall biogenesis; peptidoglycan biosynthesis. Its function is as follows. Cell wall formation. This chain is D-alanine--D-alanine ligase, found in Rhizobium meliloti (strain 1021) (Ensifer meliloti).